We begin with the raw amino-acid sequence, 346 residues long: GTPase Obg (346 aa).

The Obg domain maps to 1–159; that stretch reads MQFVDEANIR…RNLGLELSVL (159 aa). The segment at 127 to 149 is disordered; sequence NVHFKSSTNRTPRQCTPGEPGDE. Over residues 130–140 the composition is skewed to polar residues; sequence FKSSTNRTPRQ. The region spanning 160–333 is the OBG-type G domain; the sequence is ADVGLLGMPN…LVKEVAYGLE (174 aa). GTP-binding positions include 166 to 173, 191 to 195, 213 to 216, 283 to 286, and 314 to 316; these read GMPNAGKS, FTTLY, DIPG, NKTD, and SAV. The Mg(2+) site is built by Ser-173 and Thr-193.

The protein belongs to the TRAFAC class OBG-HflX-like GTPase superfamily. OBG GTPase family. As to quaternary structure, monomer. The cofactor is Mg(2+).

Its subcellular location is the cytoplasm. Its function is as follows. An essential GTPase which binds GTP, GDP and possibly (p)ppGpp with moderate affinity, with high nucleotide exchange rates and a fairly low GTP hydrolysis rate. Plays a role in control of the cell cycle, stress response, ribosome biogenesis and in those bacteria that undergo differentiation, in morphogenesis control. This Hydrogenovibrio crunogenus (strain DSM 25203 / XCL-2) (Thiomicrospira crunogena) protein is GTPase Obg.